The primary structure comprises 574 residues: 2-succinyl-5-enolpyruvyl-6-hydroxy-3-cyclohexene-1-carboxylate synthase (574 aa).

It belongs to the TPP enzyme family. MenD subfamily. As to quaternary structure, homodimer. Mg(2+) is required as a cofactor. It depends on Mn(2+) as a cofactor. Requires thiamine diphosphate as cofactor.

The catalysed reaction is isochorismate + 2-oxoglutarate + H(+) = 5-enolpyruvoyl-6-hydroxy-2-succinyl-cyclohex-3-ene-1-carboxylate + CO2. It participates in quinol/quinone metabolism; 1,4-dihydroxy-2-naphthoate biosynthesis; 1,4-dihydroxy-2-naphthoate from chorismate: step 2/7. Its pathway is cofactor biosynthesis; phylloquinone biosynthesis. Catalyzes the thiamine diphosphate-dependent decarboxylation of 2-oxoglutarate and the subsequent addition of the resulting succinic semialdehyde-thiamine pyrophosphate anion to isochorismate to yield 2-succinyl-5-enolpyruvyl-6-hydroxy-3-cyclohexene-1-carboxylate (SEPHCHC). This chain is 2-succinyl-5-enolpyruvyl-6-hydroxy-3-cyclohexene-1-carboxylate synthase, found in Synechococcus sp. (strain RCC307).